Here is a 403-residue protein sequence, read N- to C-terminus: Metacaspase-7 (403 aa).

Active-site residues include H86 and C139. Residue C139 is modified to S-nitrosocysteine.

The protein belongs to the peptidase C14B family. Post-translationally, proteolytically processed; by an autocatalytic mechanism. As to expression, expressed in roots, flowers and siliques.

The sequence is that of Metacaspase-7 (AMC7) from Arabidopsis thaliana (Mouse-ear cress).